The primary structure comprises 682 residues: Heat shock 70 kDa protein, mitochondrial (682 aa).

The transit peptide at 1–57 (MATAALLRSLRRREFATSSISAYRTLASNTKPSWCPSLVGAKWAGLARPFSSKPAGN) directs the protein to the mitochondrion. The segment at 649–682 (GEHMAGGSSGGASGGGGAQGGDQPPEAEYEEVKK) is disordered. Residues 655–668 (GSSGGASGGGGAQG) are compositionally biased toward gly residues. Acidic residues predominate over residues 673 to 682 (PEAEYEEVKK).

This sequence belongs to the heat shock protein 70 family.

It localises to the mitochondrion. This Solanum tuberosum (Potato) protein is Heat shock 70 kDa protein, mitochondrial (HSP68).